Reading from the N-terminus, the 38-residue chain is Large ribosomal subunit protein bL36 (38 aa).

This sequence belongs to the bacterial ribosomal protein bL36 family.

The chain is Large ribosomal subunit protein bL36 from Lactobacillus acidophilus (strain ATCC 700396 / NCK56 / N2 / NCFM).